A 201-amino-acid polypeptide reads, in one-letter code: Large ribosomal subunit protein uL4 (201 aa).

The disordered stretch occupies residues 45 to 71 (AQKTRAEVTGSGKKPWRQKGTGRARAG).

It belongs to the universal ribosomal protein uL4 family. In terms of assembly, part of the 50S ribosomal subunit.

Functionally, one of the primary rRNA binding proteins, this protein initially binds near the 5'-end of the 23S rRNA. It is important during the early stages of 50S assembly. It makes multiple contacts with different domains of the 23S rRNA in the assembled 50S subunit and ribosome. In terms of biological role, forms part of the polypeptide exit tunnel. The chain is Large ribosomal subunit protein uL4 from Shewanella oneidensis (strain ATCC 700550 / JCM 31522 / CIP 106686 / LMG 19005 / NCIMB 14063 / MR-1).